A 43-amino-acid polypeptide reads, in one-letter code: Thaumatin-like protein 1 (43 aa).

Belongs to the thaumatin family.

The sequence is that of Thaumatin-like protein 1 from Glebionis coronaria (Crown daisy).